The sequence spans 207 residues: MLGRPKLVLASGSPRRLALLNQAGIEPDALRPADVDETPTKGELPRACANRLARAKAEAALKSVQLDDDLRGAFLLAADTVVAVGRRILPKAELVDEASQCLRLLSGRNHRVYTAVCLVTPKGSFRQRLIETKVRFKRLSEEDIDGYVASGEWRGKAGGYAVQGIAGSFVVKIVGSYTNIVGLPLYETTSLLGGEGYPIRFGWLNAS.

Residue Asp-79 is the Proton acceptor of the active site.

It belongs to the Maf family. YhdE subfamily. The cofactor is a divalent metal cation.

It localises to the cytoplasm. It carries out the reaction dTTP + H2O = dTMP + diphosphate + H(+). The catalysed reaction is UTP + H2O = UMP + diphosphate + H(+). Its function is as follows. Nucleoside triphosphate pyrophosphatase that hydrolyzes dTTP and UTP. May have a dual role in cell division arrest and in preventing the incorporation of modified nucleotides into cellular nucleic acids. This is dTTP/UTP pyrophosphatase from Rhodopseudomonas palustris (strain HaA2).